The sequence spans 451 residues: MKTKLNIYNMQLLLFVFLVWDPARLVLANIQEDEAKNNITIFTRILDRLLDGYDNRLRPGLGDSITEVFTNIYVTSFGPVSDTDMEYTIDVFFRQKWKDERLKFKGPMNILRLNNLMASKIWTPDTFFHNGKKSVAHNMTMPNKLLRIQDDGTLLYTMRLTVQAECPMHLEDFPMDAHSCPLKFGSYAYTTSEVTYIWTYNASDSVQVAPDGSRLNQYDLLGQSIGKETIKSSTGEYTVMTAHFHLKRKIGYFVIQTYLPCIMTVILSQVSFWLNRESVPARTVFGVTTVLTMTTLSISARNSLPKVAYATAMDWFIAVCYAFVFSALIEFATVNYFTKRGWAWDGKSVVNDKKKEKASVMIQNNAYAVAVANYAPNLSKDPVLSTISKSATTPEPNKKPENKPAEAKKTFNSVSKIDRMSRIVFPVLFGTFNLVYWATYLNREPVLGVSP.

A signal peptide spans methionine 1–alanine 28. The Extracellular segment spans residues asparagine 29–lysine 249. A glycan (N-linked (GlcNAc...) asparagine) is linked at asparagine 38. Arginine 94 provides a ligand contact to 4-aminobutanoate. Residue asparagine 138 is glycosylated (N-linked (GlcNAc...) asparagine). Threonine 157 is a 4-aminobutanoate binding site. A disulfide bridge connects residues cysteine 166 and cysteine 180. A helical transmembrane segment spans residues isoleucine 250–valine 270. The Cytoplasmic segment spans residues serine 271–proline 280. Residues alanine 281–alanine 300 traverse the membrane as a helical segment. The Extracellular segment spans residues arginine 301 to threonine 311. Residues alanine 312 to alanine 332 form a helical membrane-spanning segment. The Cytoplasmic portion of the chain corresponds to threonine 333–methionine 420. A helical membrane pass occupies residues serine 421–leucine 441. The Extracellular portion of the chain corresponds to asparagine 442–proline 451.

The protein belongs to the ligand-gated ion channel (TC 1.A.9) family. Gamma-aminobutyric acid receptor (TC 1.A.9.5) subfamily. GABRA2 sub-subfamily. As to quaternary structure, heteropentamer, formed by a combination of alpha (GABRA1-6), beta (GABRB1-3), gamma (GABRG1-3), delta (GABRD), epsilon (GABRE), rho (GABRR1-3), pi (GABRP) and theta (GABRQ) subunits, each subunit exhibiting distinct physiological and pharmacological properties. Interacts with UBQLN1. Interacts with KIF21B. Interacts with LHFPL4. Interacts with SHISA7; interaction leads to the regulation of GABA(A) receptor trafficking, channel deactivation kinetics and pharmacology. Glycosylated.

It localises to the postsynaptic cell membrane. It is found in the cell membrane. The protein resides in the cytoplasmic vesicle membrane. The protein localises to the cell projection. Its subcellular location is the dendrite. The enzyme catalyses chloride(in) = chloride(out). With respect to regulation, activated by pentobarbital. Inhibited by the antagonist bicuculline. Functionally, alpha subunit of the heteropentameric ligand-gated chloride channel gated by gamma-aminobutyric acid (GABA), a major inhibitory neurotransmitter in the brain. GABA-gated chloride channels, also named GABA(A) receptors (GABAAR), consist of five subunits arranged around a central pore and contain GABA active binding site(s) located at the alpha and beta subunit interface(s). When activated by GABA, GABAARs selectively allow the flow of chloride anions across the cell membrane down their electrochemical gradient. Chloride influx into the postsynaptic neuron following GABAAR opening decreases the neuron ability to generate a new action potential, thereby reducing nerve transmission. The alpha-2 subunit exhibits synaptogenic activity together with beta-2 and very little to no activity together with beta-3, the gamma-2 subunit being necessary but not sufficient to induce rapid synaptic contacts formation. This is Gamma-aminobutyric acid receptor subunit alpha-2 (GABRA2) from Pongo abelii (Sumatran orangutan).